A 673-amino-acid polypeptide reads, in one-letter code: UvrABC system protein B (673 aa).

Residues 26–414 form the Helicase ATP-binding domain; that stretch reads EGLEDGLAHQ…GGDVVDQVVR (389 aa). 39 to 46 is an ATP binding site; the sequence is GVTGSGKT. Positions 92–115 match the Beta-hairpin motif; that stretch reads YYDYYQPEAYVPSSDTFIEKDASV. In terms of domain architecture, Helicase C-terminal spans 431–597; that stretch reads QVDDLLSEIR…GLNKKVVDIL (167 aa). Positions 633–668 constitute a UVR domain; it reads LQKIHELEGLMMQHAQNLEFEEAAQIRDQLHQLREL.

Belongs to the UvrB family. As to quaternary structure, forms a heterotetramer with UvrA during the search for lesions. Interacts with UvrC in an incision complex.

It is found in the cytoplasm. In terms of biological role, the UvrABC repair system catalyzes the recognition and processing of DNA lesions. A damage recognition complex composed of 2 UvrA and 2 UvrB subunits scans DNA for abnormalities. Upon binding of the UvrA(2)B(2) complex to a putative damaged site, the DNA wraps around one UvrB monomer. DNA wrap is dependent on ATP binding by UvrB and probably causes local melting of the DNA helix, facilitating insertion of UvrB beta-hairpin between the DNA strands. Then UvrB probes one DNA strand for the presence of a lesion. If a lesion is found the UvrA subunits dissociate and the UvrB-DNA preincision complex is formed. This complex is subsequently bound by UvrC and the second UvrB is released. If no lesion is found, the DNA wraps around the other UvrB subunit that will check the other stand for damage. In Shigella dysenteriae serotype 1 (strain Sd197), this protein is UvrABC system protein B.